The primary structure comprises 290 residues: Porphobilinogen deaminase (290 aa).

S-(dipyrrolylmethanemethyl)cysteine is present on cysteine 238.

This sequence belongs to the HMBS family. Monomer. The cofactor is dipyrromethane.

It carries out the reaction 4 porphobilinogen + H2O = hydroxymethylbilane + 4 NH4(+). Its pathway is porphyrin-containing compound metabolism; protoporphyrin-IX biosynthesis; coproporphyrinogen-III from 5-aminolevulinate: step 2/4. In terms of biological role, tetrapolymerization of the monopyrrole PBG into the hydroxymethylbilane pre-uroporphyrinogen in several discrete steps. This is Porphobilinogen deaminase from Clostridium botulinum (strain Eklund 17B / Type B).